The sequence spans 124 residues: Non-structural protein 2 (124 aa).

The DLNP; interaction with MAP1B motif lies at 121-124 (DLNP).

This sequence belongs to the pneumovirus non-structural protein 2 family. In terms of assembly, monomer (instable). Homomultimer. Heteromultimer with NS1. Interacts with host RIGI (via N-terminus); this interaction prevents host signaling pathway involved in interferon production. Interacts with host MAP1B/microtubule-associated protein 1B.

It is found in the host mitochondrion. Plays a major role in antagonizing the type I IFN-mediated antiviral response. Acts cooperatively with NS1 to repress activation and nuclear translocation of host IFN-regulatory factor IRF3. Interacts with the host cytoplasmic sensor of viral nucleic acids RIGI and prevents the interaction with its downstream partner MAVS. Together with NS2, participates in the proteasomal degradation of host STAT2, IRF3, IRF7, TBK1 and RIGI through a NS-degradasome involving CUL2 and Elongin-C. The degradasome requires an intact mitochondrial MAVS. Induces host SOCS1 expression. Induces activation of NF-kappa-B. Suppresses premature apoptosis by an NF-kappa-B-dependent, interferon-independent mechanism promoting continued viral replication. This is Non-structural protein 2 (1B) from Human respiratory syncytial virus B (strain B1).